We begin with the raw amino-acid sequence, 40 residues long: Photosystem II reaction center protein J (40 aa).

Residues 8-28 (IPLWIIGTVAGILVIGLVGVF) traverse the membrane as a helical segment.

It belongs to the PsbJ family. As to quaternary structure, PSII is composed of 1 copy each of membrane proteins PsbA, PsbB, PsbC, PsbD, PsbE, PsbF, PsbH, PsbI, PsbJ, PsbK, PsbL, PsbM, PsbT, PsbX, PsbY, PsbZ, Psb30/Ycf12, at least 3 peripheral proteins of the oxygen-evolving complex and a large number of cofactors. It forms dimeric complexes.

The protein localises to the plastid. The protein resides in the chloroplast thylakoid membrane. Functionally, one of the components of the core complex of photosystem II (PSII). PSII is a light-driven water:plastoquinone oxidoreductase that uses light energy to abstract electrons from H(2)O, generating O(2) and a proton gradient subsequently used for ATP formation. It consists of a core antenna complex that captures photons, and an electron transfer chain that converts photonic excitation into a charge separation. The chain is Photosystem II reaction center protein J from Helianthus annuus (Common sunflower).